Reading from the N-terminus, the 189-residue chain is MIDQFERLPGIGPRTAQRLALHLLRQPEDQIRAFAEALLAARSQVGQCQTCFHLSAEPLCDICRDGTRCDQLLCVVADSRDLLALERTREYKGRYHVLGGLISPMDGIGPDMLQIPSLIQRVDRDGISEVILALTPSVEGDTTSLYLARLLKPFTQVSRIAYGLPVGSELEYADEVTLTRALEGRRAMQ.

Residues 48-63 (CQTCFHLSAEPLCDIC) form a C4-type zinc finger. The Toprim domain occupies 71–165 (QLLCVVADSR…QVSRIAYGLP (95 aa)).

The protein belongs to the RecR family.

In terms of biological role, may play a role in DNA repair. It seems to be involved in an RecBC-independent recombinational process of DNA repair. It may act with RecF and RecO. In Prochlorococcus marinus (strain MIT 9303), this protein is Recombination protein RecR.